The sequence spans 552 residues: Putative lipase ATG15 (552 aa).

Residues 1–26 (MLHITEKEQTRGLRQLEKRGKRLLPP) are Cytoplasmic-facing. The chain crosses the membrane as a helical; Signal-anchor for type II membrane protein span at residues 27–49 (LIKFIWFCLISAACVAATTFYWL). Over 50 to 552 (RLSPVHNIHK…WRFVSHDDKE (503 aa)) the chain is Lumenal. 5 N-linked (GlcNAc...) asparagine glycosylation sites follow: Asn-63, Asn-147, Asn-239, Asn-307, and Asn-391. Ser-409 serves as the catalytic Charge relay system. Residue Asn-526 is glycosylated (N-linked (GlcNAc...) asparagine).

It belongs to the AB hydrolase superfamily. Lipase family. Binds to both phosphatidylinositol (PI) and phosphatidylinositol 3,5-bisphosphate (PIP2).

The protein localises to the endosome. It localises to the multivesicular body membrane. Its subcellular location is the prevacuolar compartment membrane. It catalyses the reaction a triacylglycerol + H2O = a diacylglycerol + a fatty acid + H(+). Its function is as follows. Lipase which is essential for lysis of subvacuolar cytoplasm to vacuole targeted bodies and intravacuolar autophagic bodies. Involved in the lysis of intravacuolar multivesicular body (MVB) vesicles. The intravacuolar membrane disintegration by ATG15 is critical to life span extension. The polypeptide is Putative lipase ATG15 (ATG15) (Lodderomyces elongisporus (strain ATCC 11503 / CBS 2605 / JCM 1781 / NBRC 1676 / NRRL YB-4239) (Yeast)).